We begin with the raw amino-acid sequence, 561 residues long: Putative transport protein YbjL (561 aa).

The next 5 membrane-spanning stretches (helical) occupy residues 8 to 28, 32 to 52, 66 to 86, 94 to 114, and 158 to 178; these read LLNG…LCLG, LGSI…LLGQ, FMLF…SIFF, MLAL…GKLF, and NLSL…IVGA. RCK C-terminal domains are found at residues 200-288 and 292-373; these read RGLD…SFRN and VFDR…RIGF. Transmembrane regions (helical) follow at residues 383–403, 406–426, 447–467, 475–495, and 540–560; these read LLAF…TFQF, FSFG…LGFL, FGLM…ISNG, MLIA…LFGA, and AIAN…WPGL.

It belongs to the AAE transporter (TC 2.A.81) family. YbjL subfamily.

It localises to the cell membrane. In Salmonella arizonae (strain ATCC BAA-731 / CDC346-86 / RSK2980), this protein is Putative transport protein YbjL.